The primary structure comprises 1951 residues: [F-actin]-monooxygenase MICAL2 (1951 aa).

The interval 2-494 (GENEDEKQAQ…KHLYITKEMD (493 aa)) is monooxygenase domain. FAD is bound by residues C97, 116–118 (EKR), 123–125 (RNN), F183, Y298, and D398. Residues 516-619 (DIRPNKLLTW…MVMYLSKFYE (104 aa)) form the Calponin-homology (CH) domain. Residue S631 is modified to Phosphoserine. The Nuclear localization signal signature appears at 660 to 681 (RKRTPRVDTQTEENDMNKRRRQ). Disordered regions lie at residues 663 to 712 (TPRV…SQNK) and 891 to 921 (KRVPHAHPPSPPSCLPSPHPAAASSPPAADS). Over residues 691–700 (SFSSRSLGSS) the composition is skewed to low complexity. Residues 896–909 (AHPPSPPSCLPSPH) show a composition bias toward pro residues. The span at 910 to 921 (PAAASSPPAADS) shows a compositional bias: low complexity. One can recognise an LIM zinc-binding domain in the interval 991 to 1053 (DTCYFCKKRV…KPHFVHCKTS (63 aa)). Zn(2+)-binding residues include C993, C996, H1014, C1017, C1020, C1023, C1043, and H1046. A Phosphoserine modification is found at T1052. Disordered stretches follow at residues 1054 to 1141 (SKQR…RISP), 1158 to 1314 (TSED…VSPT), 1348 to 1368 (VEPGRESLRSPEEISSSEGCQ), 1383 to 1427 (ILGK…RKLG), 1451 to 1476 (HKTGEQLSQESAENIRGGSLKPTCSS), 1489 to 1580 (QKKA…AKKA), 1594 to 1624 (AQASDLSLPNSILRSRSLPSRPSKMFFSTTP), 1678 to 1697 (GDFFNSPKEEGPPGNRVPSL), 1706 to 1731 (STSMGQVAHPSSTGQDARKLEGGEGG), and 1747 to 1766 (PVTEATSSPTSSSAEEEADS). The segment covering 1061-1070 (AELNQQREEE) has biased composition (basic and acidic residues). Composition is skewed to polar residues over residues 1129 to 1138 (PRPSEWTSVR), 1228 to 1239 (HSLQSPTPSKYQ), and 1246 to 1256 (QSNSTPMNQRA). The segment covering 1257–1268 (PSPPKEPPPPPS) has biased composition (pro residues). Residues 1269–1285 (LSSSSSLPSSFSSASVP) show a composition bias toward low complexity. The span at 1291-1306 (DSSSPQVTYNLHSPQI) shows a compositional bias: polar residues. Positions 1314–1353 (TPIYLRRARAQGIVKEIPLYLPHSPMLESTEDCLVEPGRE) are interaction with MAPK1. Residues 1350-1359 (PGRESLRSPE) show a composition bias toward basic and acidic residues. Residues 1532-1545 (EAGKKTSPKPESKT) are compositionally biased toward basic and acidic residues. Residues 1599-1616 (LSLPNSILRSRSLPSRPS) are compositionally biased toward low complexity. Residues 1678–1688 (GDFFNSPKEEG) show a composition bias toward basic and acidic residues. S1683 is subject to Phosphoserine. Residues 1706-1720 (STSMGQVAHPSSTGQ) show a composition bias toward polar residues. A compositionally biased stretch (low complexity) spans 1749 to 1759 (TEATSSPTSSS). The bMERB domain maps to 1789–1939 (KQEELKRLHK…ERTQDQHFEN (151 aa)).

This sequence belongs to the Mical family. Interacts with PLXNA4. Interacts with RAB1B. Interacts with MAPK1/ERK2. Interacts with RAB1B, RAB35, RAB8A, RAB10, RAB13 and RAB15 (in their GTP-bound forms); binding to RAB1B and RAB35 is of low affinity compared to other Rab proteins; binding to RAB1B and RAB35 is of low affinity compared to other Rab proteins; at least in case of RAB8A may bind 2 molecules of RAB8A simultaneously through a high and a low affinity binding site, respectively. It depends on FAD as a cofactor. In terms of tissue distribution, expressed only in testis (at protein level).

The protein localises to the cytoplasm. The protein resides in the nucleus. It carries out the reaction L-methionyl-[F-actin] + NADPH + O2 + H(+) = L-methionyl-(R)-S-oxide-[F-actin] + NADP(+) + H2O. Methionine monooxygenase that promotes depolymerization of F-actin by mediating oxidation of residues 'Met-44' and 'Met-47' on actin to form methionine-sulfoxide, resulting in actin filament disassembly and preventing repolymerization. Regulates the disassembly of branched actin networks also by oxidizing ARP3B-containing ARP2/3 complexes leading to ARP3B dissociation from the network. Acts as a key regulator of the SRF signaling pathway elicited by nerve growth factor and serum: mediates oxidation and subsequent depolymerization of nuclear actin, leading to increase MKL1/MRTF-A presence in the nucleus and promote SRF:MKL1/MRTF-A-dependent gene transcription. Does not activate SRF:MKL1/MRTF-A through RhoA. The sequence is that of [F-actin]-monooxygenase MICAL2 from Mus musculus (Mouse).